The following is a 336-amino-acid chain: Biotin synthase (336 aa).

In terms of domain architecture, Radical SAM core spans 54-281; sequence NAIQLSTLLS…KAMVRLSAGR (228 aa). [4Fe-4S] cluster-binding residues include C69, C73, and C76. [2Fe-2S] cluster is bound by residues C113, C144, C204, and R276.

It belongs to the radical SAM superfamily. Biotin synthase family. As to quaternary structure, homodimer. [4Fe-4S] cluster serves as cofactor. The cofactor is [2Fe-2S] cluster.

It carries out the reaction (4R,5S)-dethiobiotin + (sulfur carrier)-SH + 2 reduced [2Fe-2S]-[ferredoxin] + 2 S-adenosyl-L-methionine = (sulfur carrier)-H + biotin + 2 5'-deoxyadenosine + 2 L-methionine + 2 oxidized [2Fe-2S]-[ferredoxin]. The protein operates within cofactor biosynthesis; biotin biosynthesis; biotin from 7,8-diaminononanoate: step 2/2. Functionally, catalyzes the conversion of dethiobiotin (DTB) to biotin by the insertion of a sulfur atom into dethiobiotin via a radical-based mechanism. The protein is Biotin synthase of Burkholderia thailandensis (strain ATCC 700388 / DSM 13276 / CCUG 48851 / CIP 106301 / E264).